A 347-amino-acid polypeptide reads, in one-letter code: Holliday junction branch migration complex subunit RuvB (347 aa).

The interval 1-183 (MTPPSRIVTP…FGIPIRLNFY (183 aa)) is large ATPase domain (RuvB-L). ATP-binding positions include Leu-22, Arg-23, Gly-64, Lys-67, Thr-68, Thr-69, 130-132 (EDF), Arg-173, Tyr-183, and Arg-220. Thr-68 provides a ligand contact to Mg(2+). The interval 184-254 (TVEELEGIVS…IADHALSALE (71 aa)) is small ATPAse domain (RuvB-S). The interval 257-347 (AAGLDAMDRR…QFGLFGGDEE (91 aa)) is head domain (RuvB-H). DNA-binding residues include Arg-293, Arg-312, and Arg-317.

Belongs to the RuvB family. As to quaternary structure, homohexamer. Forms an RuvA(8)-RuvB(12)-Holliday junction (HJ) complex. HJ DNA is sandwiched between 2 RuvA tetramers; dsDNA enters through RuvA and exits via RuvB. An RuvB hexamer assembles on each DNA strand where it exits the tetramer. Each RuvB hexamer is contacted by two RuvA subunits (via domain III) on 2 adjacent RuvB subunits; this complex drives branch migration. In the full resolvosome a probable DNA-RuvA(4)-RuvB(12)-RuvC(2) complex forms which resolves the HJ.

The protein localises to the cytoplasm. The catalysed reaction is ATP + H2O = ADP + phosphate + H(+). In terms of biological role, the RuvA-RuvB-RuvC complex processes Holliday junction (HJ) DNA during genetic recombination and DNA repair, while the RuvA-RuvB complex plays an important role in the rescue of blocked DNA replication forks via replication fork reversal (RFR). RuvA specifically binds to HJ cruciform DNA, conferring on it an open structure. The RuvB hexamer acts as an ATP-dependent pump, pulling dsDNA into and through the RuvAB complex. RuvB forms 2 homohexamers on either side of HJ DNA bound by 1 or 2 RuvA tetramers; 4 subunits per hexamer contact DNA at a time. Coordinated motions by a converter formed by DNA-disengaged RuvB subunits stimulates ATP hydrolysis and nucleotide exchange. Immobilization of the converter enables RuvB to convert the ATP-contained energy into a lever motion, pulling 2 nucleotides of DNA out of the RuvA tetramer per ATP hydrolyzed, thus driving DNA branch migration. The RuvB motors rotate together with the DNA substrate, which together with the progressing nucleotide cycle form the mechanistic basis for DNA recombination by continuous HJ branch migration. Branch migration allows RuvC to scan DNA until it finds its consensus sequence, where it cleaves and resolves cruciform DNA. The protein is Holliday junction branch migration complex subunit RuvB of Rhodopseudomonas palustris (strain BisA53).